We begin with the raw amino-acid sequence, 98 residues long: NADH-ubiquinone oxidoreductase chain 4L (98 aa).

3 helical membrane passes run methionine 1 to methionine 21, leucine 30 to threonine 50, and isoleucine 61 to valine 81.

It belongs to the complex I subunit 4L family. As to quaternary structure, core subunit of respiratory chain NADH dehydrogenase (Complex I) which is composed of 45 different subunits.

Its subcellular location is the mitochondrion inner membrane. It carries out the reaction a ubiquinone + NADH + 5 H(+)(in) = a ubiquinol + NAD(+) + 4 H(+)(out). Its function is as follows. Core subunit of the mitochondrial membrane respiratory chain NADH dehydrogenase (Complex I) which catalyzes electron transfer from NADH through the respiratory chain, using ubiquinone as an electron acceptor. Part of the enzyme membrane arm which is embedded in the lipid bilayer and involved in proton translocation. The chain is NADH-ubiquinone oxidoreductase chain 4L (MT-ND4L) from Crocidura russula (Greater white-toothed shrew).